A 124-amino-acid chain; its full sequence is Small ribosomal subunit protein uS12 (124 aa).

The disordered stretch occupies residues 8-30 (IRSARQDTEKQTKSPALKSCPQR). The residue at position 89 (D89) is a 3-methylthioaspartic acid. The segment at 103–124 (DTAGVKDRKQSRSKYGAKKPKA) is disordered. Over residues 113–124 (SRSKYGAKKPKA) the composition is skewed to basic residues.

It belongs to the universal ribosomal protein uS12 family. As to quaternary structure, part of the 30S ribosomal subunit. Contacts proteins S8 and S17. May interact with IF1 in the 30S initiation complex.

Its function is as follows. With S4 and S5 plays an important role in translational accuracy. Functionally, interacts with and stabilizes bases of the 16S rRNA that are involved in tRNA selection in the A site and with the mRNA backbone. Located at the interface of the 30S and 50S subunits, it traverses the body of the 30S subunit contacting proteins on the other side and probably holding the rRNA structure together. The combined cluster of proteins S8, S12 and S17 appears to hold together the shoulder and platform of the 30S subunit. The sequence is that of Small ribosomal subunit protein uS12 from Trichodesmium erythraeum (strain IMS101).